We begin with the raw amino-acid sequence, 256 residues long: MTAMSLATLETRLDHRFGDKALLEQALTHRSHGARHNERLEFLGDSVLNFVVAAMLFERYGKLDEGDLSRLRANLVKQASLADIAQRLDLSQYLRLGEGELKSGGFRRPSILADTVEALFGAVFLDAGFEAARRVIVRQYQPVMAHVDPKTLGKDAKTLLQEFLQGRKLALPQYTVVATHGAAHSQQFEVECAIPALEIKIVAPGASRRAAEQSAAKVALEAAQAVLPAARAARKSGKARKTAQLSLPVAVAQEVK.

One can recognise an RNase III domain in the interval L6–G128. E41 provides a ligand contact to Mg(2+). D45 is an active-site residue. Mg(2+)-binding residues include D114 and E117. Residue E117 is part of the active site. The 71-residue stretch at D155–A225 folds into the DRBM domain.

This sequence belongs to the ribonuclease III family. As to quaternary structure, homodimer. Mg(2+) is required as a cofactor.

It localises to the cytoplasm. The catalysed reaction is Endonucleolytic cleavage to 5'-phosphomonoester.. Functionally, digests double-stranded RNA. Involved in the processing of primary rRNA transcript to yield the immediate precursors to the large and small rRNAs (23S and 16S). Processes some mRNAs, and tRNAs when they are encoded in the rRNA operon. Processes pre-crRNA and tracrRNA of type II CRISPR loci if present in the organism. This Bordetella bronchiseptica (strain ATCC BAA-588 / NCTC 13252 / RB50) (Alcaligenes bronchisepticus) protein is Ribonuclease 3.